Consider the following 78-residue polypeptide: DNA-directed RNA polymerase subunit Rpo5 (78 aa).

The protein belongs to the archaeal Rpo5/eukaryotic RPB5 RNA polymerase subunit family. Part of the RNA polymerase complex.

The protein localises to the cytoplasm. The catalysed reaction is RNA(n) + a ribonucleoside 5'-triphosphate = RNA(n+1) + diphosphate. DNA-dependent RNA polymerase (RNAP) catalyzes the transcription of DNA into RNA using the four ribonucleoside triphosphates as substrates. The chain is DNA-directed RNA polymerase subunit Rpo5 from Methanocaldococcus jannaschii (strain ATCC 43067 / DSM 2661 / JAL-1 / JCM 10045 / NBRC 100440) (Methanococcus jannaschii).